The primary structure comprises 371 residues: tRNA-specific 2-thiouridylase MnmA (371 aa).

ATP-binding positions include 14-21 and Met-40; that span reads GMSGGVDS. The interaction with target base in tRNA stretch occupies residues 100–102; the sequence is NPD. Cys-105 (nucleophile) is an active-site residue. Cys-105 and Cys-205 form a disulfide bridge. Residue Gly-129 coordinates ATP. The segment at 155–157 is interaction with tRNA; it reads KDQ. Cys-205 serves as the catalytic Cysteine persulfide intermediate. Residues 321–322 are interaction with tRNA; that stretch reads RY.

The protein belongs to the MnmA/TRMU family.

Its subcellular location is the cytoplasm. The catalysed reaction is S-sulfanyl-L-cysteinyl-[protein] + uridine(34) in tRNA + AH2 + ATP = 2-thiouridine(34) in tRNA + L-cysteinyl-[protein] + A + AMP + diphosphate + H(+). Functionally, catalyzes the 2-thiolation of uridine at the wobble position (U34) of tRNA, leading to the formation of s(2)U34. The protein is tRNA-specific 2-thiouridylase MnmA of Bordetella pertussis (strain Tohama I / ATCC BAA-589 / NCTC 13251).